The following is a 167-amino-acid chain: Aphrodisin (167 aa).

Residues Met-1–Ala-16 form the signal peptide. Gln-17 is modified (pyrrolidone carboxylic acid). Intrachain disulfides connect Cys-54-Cys-58 and Cys-73-Cys-165. Asn-57 and Asn-85 each carry an N-linked (GlcNAc...) asparagine glycan.

This sequence belongs to the calycin superfamily. Lipocalin family. In terms of tissue distribution, expressed in the vagina, uterus, and Bartholin's glands of female hamsters. Secreted in vaginal discharge.

The protein localises to the secreted. Its function is as follows. Acts as an aphrodisiac pheromone, reliably eliciting copulatory behavior from male hamster. The sequence is that of Aphrodisin from Cricetus cricetus (Black-bellied hamster).